A 505-amino-acid polypeptide reads, in one-letter code: Glutamate--tRNA ligase (505 aa).

The 'HIGH' region signature appears at 12–22; sequence PSPTGALHIGG. Positions 260–264 match the 'KMSKS' region motif; sequence KLSKR. Position 263 (Lys263) interacts with ATP.

This sequence belongs to the class-I aminoacyl-tRNA synthetase family. Glutamate--tRNA ligase type 1 subfamily. As to quaternary structure, monomer.

The protein localises to the cytoplasm. The catalysed reaction is tRNA(Glu) + L-glutamate + ATP = L-glutamyl-tRNA(Glu) + AMP + diphosphate. Its function is as follows. Catalyzes the attachment of glutamate to tRNA(Glu) in a two-step reaction: glutamate is first activated by ATP to form Glu-AMP and then transferred to the acceptor end of tRNA(Glu). This chain is Glutamate--tRNA ligase, found in Parabacteroides distasonis (strain ATCC 8503 / DSM 20701 / CIP 104284 / JCM 5825 / NCTC 11152).